Reading from the N-terminus, the 468-residue chain is MGIQLTNTMTRRKEPFHTLEPGKVKMYVCGPTVYNYIHIGNARPAIVFDTLRRYLKYRGYEVTFVQNITDVDDKLIRVANQEGVTVKEVADRYTDAYNADLKSLNVSPPDIQPRVMQTIPEIIEFVQGLIEKGFAYESEGDVYFRTGRFQEYGKLSHQPLDDLQAGARVEINEKKEHPLDFVLWKAAKTGEVTWDSPWGEGRPGWHIECSAMALKFLGEEIDIHAGGTDLVFPHHENEIAQSECFTGKVFARYWLHNGMLNIDNEKMSKSLGNFLLARDLSEKFGGQLIRFFMLQGHYRNPINFSEELIEQAANGLDRITTAYTNLSHRLDTARAEEPNDQAQEQARIIGELRERFIAEMDDDINTANAITVIFDVVKEANLYLRHQNVGETEVRAYMDLLVELTEVLGLDIAEEQELLDSEIDALIEERTEARKARNFARSDEIRDLLAAKGIVLEDTPQGVRWRRK.

C29 contributes to the Zn(2+) binding site. The 'HIGH' region signature appears at 31-41 (PTVYNYIHIGN). 3 residues coordinate Zn(2+): C209, H234, and E238. The 'KMSKS' region signature appears at 266–270 (KMSKS). K269 contacts ATP.

This sequence belongs to the class-I aminoacyl-tRNA synthetase family. Monomer. It depends on Zn(2+) as a cofactor.

It localises to the cytoplasm. It catalyses the reaction tRNA(Cys) + L-cysteine + ATP = L-cysteinyl-tRNA(Cys) + AMP + diphosphate. In Brevibacillus brevis (strain 47 / JCM 6285 / NBRC 100599), this protein is Cysteine--tRNA ligase.